Reading from the N-terminus, the 395-residue chain is MTMRSKTFSDRILNDSEFFKWCQKEESRNADSITLYKSILEFESKFKSGSPSLSLLKLARHIHRKYVSLNTGTCNVIEDSTRTEMSKRVHEVLDGKSPYIELFDPLKQPLFQHLRSMHTEYSTTTADVSNTWEDTSSTDSSDKGATIWFNDDAIDRSSRHEISQNTVTHESEDDRFAFFNAVCTRLNSLQETKNSSETEEEKKKERSADPYGSDGFAPPPQSTQTHTLRNLPKRFESLYKKKRQQNTTTTDSSGFGSNASDFWSFERYGKSNHGTLERPNRLFPGSNNGFSTLQPKKRSGEIQKLTVELRYENDVPMVAKISANQSVTLRYFRHLFGLHYSDNCRFFFKSTCEDGSAHYQWTLLFQDDDILPVFQNRITAICRMCPPPPEDHHLI.

An RGS domain is found at 4-132 (RSKTFSDRIL…TTTADVSNTW (129 aa)). Residues 190-230 (QETKNSSETEEEKKKERSADPYGSDGFAPPPQSTQTHTLRN) are disordered. Residues 194-208 (NSSETEEEKKKERSA) show a composition bias toward basic and acidic residues. The region spanning 301 to 386 (EIQKLTVELR…RITAICRMCP (86 aa)) is the DIX domain.

As to quaternary structure, interacts with bar-1, dsh-2, gsk-3, and mig-5.

Its function is as follows. Works in parallel with pry-1 in negatively regulating bar-1 signaling in vulval precursor cells and Q neuroblasts. Shown to have a role in excretory cell development. This is Axin-like protein 1 (axl-1) from Caenorhabditis briggsae.